The following is a 284-amino-acid chain: 2,3,4,5-tetrahydropyridine-2,6-dicarboxylate N-succinyltransferase (284 aa).

2 residues coordinate substrate: arginine 111 and aspartate 148.

The protein belongs to the transferase hexapeptide repeat family. Homotrimer.

The protein localises to the cytoplasm. The enzyme catalyses (S)-2,3,4,5-tetrahydrodipicolinate + succinyl-CoA + H2O = (S)-2-succinylamino-6-oxoheptanedioate + CoA. It functions in the pathway amino-acid biosynthesis; L-lysine biosynthesis via DAP pathway; LL-2,6-diaminopimelate from (S)-tetrahydrodipicolinate (succinylase route): step 1/3. The protein is 2,3,4,5-tetrahydropyridine-2,6-dicarboxylate N-succinyltransferase of Mesorhizobium japonicum (strain LMG 29417 / CECT 9101 / MAFF 303099) (Mesorhizobium loti (strain MAFF 303099)).